A 115-amino-acid chain; its full sequence is Large ribosomal subunit protein bL20 (115 aa).

This sequence belongs to the bacterial ribosomal protein bL20 family.

Functionally, binds directly to 23S ribosomal RNA and is necessary for the in vitro assembly process of the 50S ribosomal subunit. It is not involved in the protein synthesizing functions of that subunit. This is Large ribosomal subunit protein bL20 from Chlorobaculum parvum (strain DSM 263 / NCIMB 8327) (Chlorobium vibrioforme subsp. thiosulfatophilum).